The following is a 178-amino-acid chain: MSRIGKKTIVIPAGVTVTLNGSTATVKGPKGELVKEFNPEITINIEGNEINVSRPTDNKNHRALHGTTRAILNNMVVGVSEGYEKKLELIGVGYRAQKQGDKLVLNVGYSHPVEFVAPKGVDIEVPANTQVIVKGYNKEHVGELAANIRAVRPPEPYKGKGIRYEGEHVRRKEGKTGK.

Positions 159 to 178 (GKGIRYEGEHVRRKEGKTGK) are disordered.

It belongs to the universal ribosomal protein uL6 family. In terms of assembly, part of the 50S ribosomal subunit.

This protein binds to the 23S rRNA, and is important in its secondary structure. It is located near the subunit interface in the base of the L7/L12 stalk, and near the tRNA binding site of the peptidyltransferase center. The sequence is that of Large ribosomal subunit protein uL6 from Listeria monocytogenes serotype 4b (strain CLIP80459).